The sequence spans 965 residues: Probable ion channel POLLUX (965 aa).

Residues 1-11 (MAESDGGEASP) show a composition bias toward low complexity. 2 disordered regions span residues 1 to 76 (MAES…APRG) and 108 to 158 (GPHA…KSLA). Polar residues predominate over residues 32 to 42 (LTKSRTISGSA). 2 stretches are compositionally biased toward low complexity: residues 52–66 (SNSSSSILVRRSSTA) and 118–149 (RSQQQTPTTTAAAAADSRSPTPAAPPQTASVS). Helical transmembrane passes span 187–207 (LSPYLVLMLVVTVISFSLAIW), 251–271 (ADWNLASCSRMLVFAIPVFLV), 317–337 (LALLLATIILIASGGIALYVV), and 369–389 (IVSVSISSGGMLVFATMLGLV). 2 consecutive RCK N-terminal domains span residues 410-551 (VNHI…ETVV) and 670-818 (PEKI…DKSI).

The protein belongs to the castor/pollux (TC 1.A.1.23) family. As to expression, expressed in roots, leaves, stems and panicles.

Its subcellular location is the nucleus membrane. In terms of biological role, required for mycorrhizal symbiosis. This chain is Probable ion channel POLLUX, found in Oryza sativa subsp. japonica (Rice).